The primary structure comprises 356 residues: MSRLSLVLILVAGLFATALAGPATFADKNPIRQVVFPDELENGILQVVGQTRSALSFARFAIRHRKRYDSVEEIKQRFEIFLDNLKMIRSHNRKGLSYKLGINEFTDLTWDEFRKHKLGASQNCSATTKGNLKLTNVVLPETKDWRKDGIVSPVKAQGKCGSCWTFSTTGALEAAYAQAFGKGISLSEQQLVDCAGAFNNFGCNGGLPSQAFEYIKFNGGLDTEEAYPYTGKNGICKFSQANIGVKVISSVNITLGAEYELKYAVALVRPVSVAFEVVKGFKQYKSGVYASTECGDTPMDVNHAVLAVGYGVENGTPYWLIKNSWGADWGEDGYFKMEMGKNMCGVATCASYPIVA.

An N-terminal signal peptide occupies residues 1 to 16; sequence MSRLSLVLILVAGLFA. Residues 17-138 constitute a propeptide, activation peptide; the sequence is TALAGPATFA…KGNLKLTNVV (122 aa). The N-linked (GlcNAc...) asparagine glycan is linked to Asn-123. 2 cysteine pairs are disulfide-bonded: Cys-160–Cys-203 and Cys-194–Cys-236. Residue Cys-163 is part of the active site. Asn-252 is a glycosylation site (N-linked (GlcNAc...) asparagine). The cysteines at positions 294 and 344 are disulfide-linked. Active-site residues include His-303 and Asn-323.

The protein belongs to the peptidase C1 family. In terms of tissue distribution, predominantly expressed in stem and root.

The protein resides in the vacuole. The sequence is that of Cysteine proteinase 3 (CYP-3) from Solanum lycopersicum (Tomato).